A 315-amino-acid polypeptide reads, in one-letter code: Phosphatidylglycerol--prolipoprotein diacylglyceryl transferase (315 aa).

A run of 2 helical transmembrane segments spans residues 19–39 (FTIHMYAICILIGICVAVWIL) and 93–113 (VWEGGMAIFGGISVGTLVAFL). Arg-141 contacts a 1,2-diacyl-sn-glycero-3-phospho-(1'-sn-glycerol). Helical transmembrane passes span 188–208 (LFHPTFLYEMIWNLIGAALII) and 256–276 (MWTAIIVFVLGCILFVVLYQY).

Belongs to the Lgt family.

It localises to the cell membrane. It catalyses the reaction L-cysteinyl-[prolipoprotein] + a 1,2-diacyl-sn-glycero-3-phospho-(1'-sn-glycerol) = an S-1,2-diacyl-sn-glyceryl-L-cysteinyl-[prolipoprotein] + sn-glycerol 1-phosphate + H(+). Its pathway is protein modification; lipoprotein biosynthesis (diacylglyceryl transfer). Catalyzes the transfer of the diacylglyceryl group from phosphatidylglycerol to the sulfhydryl group of the N-terminal cysteine of a prolipoprotein, the first step in the formation of mature lipoproteins. This Bifidobacterium longum subsp. infantis (strain ATCC 15697 / DSM 20088 / JCM 1222 / NCTC 11817 / S12) protein is Phosphatidylglycerol--prolipoprotein diacylglyceryl transferase.